The following is a 755-amino-acid chain: Catalase-peroxidase (755 aa).

Positions 93-241 (WHSAGTYRVF…LAAAHMGLIY (149 aa)) form a cross-link, tryptophyl-tyrosyl-methioninium (Trp-Tyr) (with M-267). The Proton acceptor role is filled by His-94. The segment at residues 241–267 (YVNPEGPDGNPDPVAAARDIRVTFGRM) is a cross-link (tryptophyl-tyrosyl-methioninium (Tyr-Met) (with W-93)). His-282 serves as a coordination point for heme b.

It belongs to the peroxidase family. Peroxidase/catalase subfamily. As to quaternary structure, homodimer or homotetramer. Heme b serves as cofactor. In terms of processing, formation of the three residue Trp-Tyr-Met cross-link is important for the catalase, but not the peroxidase activity of the enzyme.

Its subcellular location is the cytoplasm. The enzyme catalyses H2O2 + AH2 = A + 2 H2O. The catalysed reaction is 2 H2O2 = O2 + 2 H2O. Functionally, bifunctional enzyme with both catalase and broad-spectrum peroxidase activity. In Podospora anserina (strain S / ATCC MYA-4624 / DSM 980 / FGSC 10383) (Pleurage anserina), this protein is Catalase-peroxidase.